A 407-amino-acid polypeptide reads, in one-letter code: Gonadotropin-releasing hormone receptor (407 aa).

At 1–36 (MDYLNDSMFNNMTYNITSTPLPDAPRFDNVYVSKLC) the chain is on the extracellular side. N-linked (GlcNAc...) asparagine glycans are attached at residues asparagine 5, asparagine 11, and asparagine 15. A helical transmembrane segment spans residues 37–57 (VLGTVFVISFFGNTLVIIQIF). Residues 58–69 (RIRGSRSTIQSL) lie on the Cytoplasmic side of the membrane. Residues 70–90 (ILNLAIADLMVSFFNILMDII) traverse the membrane as a helical segment. Residues 91–105 (WSATVEWLAGNTMCK) lie on the Extracellular side of the membrane. Cysteines 104 and 183 form a disulfide. A helical transmembrane segment spans residues 106–126 (IMKYLTVFGLHLSTYITVSIA). Over 127 to 147 (LDRCFAILSPMSRSKAPLRVR) the chain is Cytoplasmic. The chain crosses the membrane as a helical span at residues 148–168 (IMITMAWVLSAIFSIPQAVIF). The Extracellular portion of the chain corresponds to 169–199 (QEQRKMFRQGMFHQCRDSYNALWQKQLYSAS). A helical transmembrane segment spans residues 200 to 220 (SLILLFVIPLIIMVTSYLLIL). Residues 221–268 (KTIVKTSRQFHDTPISPTSMSCYSVNHGQIRTHLFERARKRSSRMSAV) are Cytoplasmic-facing. The chain crosses the membrane as a helical span at residues 269–289 (IVAAFILCWTPYYIIFLGFAF). The Extracellular portion of the chain corresponds to 290–298 (FQWDNSRTV). A helical transmembrane segment spans residues 299 to 319 (IYFFTLGTSNCMLNPLIYGAF). The Cytoplasmic segment spans residues 320 to 407 (TIYKVHRGRS…NGKMPTKPPG (88 aa)). Residues 377–407 (SLTNPHQPVRPSPGINSTTSPNGKMPTKPPG) form a disordered region.

The protein belongs to the G-protein coupled receptor 1 family. Widely expressed in peripheral nervous tissue, gonadal tissue and brain. In the brain, expression is high in the palliovisceral lobe and superior buccal lobe but low in the subvertical lobe, superior and inferior frontal lobe, posterior brachial lobe and pedal lobe. Expressed in stomach, rectum, aorta, heart, salivary gland, branchia, pancreas, radula retractor muscle, branchial vessel but not in white body, esophagus, liver and kidney.

The protein localises to the cell membrane. Functionally, receptor for gonadotropin releasing hormone (GnRH) that mediates the action of GnRH to stimulate the secretion of the gonadotropic hormones luteinizing hormone (LH) and follicle-stimulating hormone (FSH). This receptor mediates its action by association with G-proteins that activate a phosphatidylinositol-calcium second messenger system. Ligand interaction triggers steroidogenesis in spermatozoa and follicles. Appears to be involved in contraction of the radula retractor muscle. The polypeptide is Gonadotropin-releasing hormone receptor (Octopus vulgaris (Common octopus)).